We begin with the raw amino-acid sequence, 361 residues long: Histidinol-phosphate aminotransferase (361 aa).

Lysine 220 bears the N6-(pyridoxal phosphate)lysine mark.

This sequence belongs to the class-II pyridoxal-phosphate-dependent aminotransferase family. Histidinol-phosphate aminotransferase subfamily. In terms of assembly, homodimer. The cofactor is pyridoxal 5'-phosphate.

It catalyses the reaction L-histidinol phosphate + 2-oxoglutarate = 3-(imidazol-4-yl)-2-oxopropyl phosphate + L-glutamate. It functions in the pathway amino-acid biosynthesis; L-histidine biosynthesis; L-histidine from 5-phospho-alpha-D-ribose 1-diphosphate: step 7/9. This is Histidinol-phosphate aminotransferase from Syntrophus aciditrophicus (strain SB).